A 272-amino-acid chain; its full sequence is Bis(5'-nucleosyl)-tetraphosphatase, symmetrical (272 aa).

Belongs to the Ap4A hydrolase family.

It carries out the reaction P(1),P(4)-bis(5'-adenosyl) tetraphosphate + H2O = 2 ADP + 2 H(+). Hydrolyzes diadenosine 5',5'''-P1,P4-tetraphosphate to yield ADP. This Ectopseudomonas mendocina (strain ymp) (Pseudomonas mendocina) protein is Bis(5'-nucleosyl)-tetraphosphatase, symmetrical.